A 753-amino-acid chain; its full sequence is 5-methyltetrahydropteroyltriglutamate--homocysteine methyltransferase (753 aa).

5-methyltetrahydropteroyltri-L-glutamate is bound by residues 17–20 (RELK) and K117. L-homocysteine is bound by residues 431–433 (IGS) and E484. Residues 431–433 (IGS) and E484 contribute to the L-methionine site. Residues 515–516 (RC) and W561 each bind 5-methyltetrahydropteroyltri-L-glutamate. D599 serves as a coordination point for L-homocysteine. Residue D599 coordinates L-methionine. Residue E605 participates in 5-methyltetrahydropteroyltri-L-glutamate binding. Residues H641, C643, and E665 each contribute to the Zn(2+) site. Residue H694 is the Proton donor of the active site. Residue C726 coordinates Zn(2+).

It belongs to the vitamin-B12 independent methionine synthase family. The cofactor is Zn(2+).

It catalyses the reaction 5-methyltetrahydropteroyltri-L-glutamate + L-homocysteine = tetrahydropteroyltri-L-glutamate + L-methionine. It participates in amino-acid biosynthesis; L-methionine biosynthesis via de novo pathway; L-methionine from L-homocysteine (MetE route): step 1/1. Its function is as follows. Catalyzes the transfer of a methyl group from 5-methyltetrahydrofolate to homocysteine resulting in methionine formation. In Escherichia coli O157:H7, this protein is 5-methyltetrahydropteroyltriglutamate--homocysteine methyltransferase.